Reading from the N-terminus, the 324-residue chain is Methionyl-tRNA formyltransferase (324 aa).

114–117 is a binding site for (6S)-5,6,7,8-tetrahydrofolate; that stretch reads SLLP.

The protein belongs to the Fmt family.

The enzyme catalyses L-methionyl-tRNA(fMet) + (6R)-10-formyltetrahydrofolate = N-formyl-L-methionyl-tRNA(fMet) + (6S)-5,6,7,8-tetrahydrofolate + H(+). Functionally, attaches a formyl group to the free amino group of methionyl-tRNA(fMet). The formyl group appears to play a dual role in the initiator identity of N-formylmethionyl-tRNA by promoting its recognition by IF2 and preventing the misappropriation of this tRNA by the elongation apparatus. The sequence is that of Methionyl-tRNA formyltransferase from Azobacteroides pseudotrichonymphae genomovar. CFP2.